The sequence spans 549 residues: Arginine--tRNA ligase (549 aa).

Residues 122-132 (ANPTGFLHLGH) carry the 'HIGH' region motif.

Belongs to the class-I aminoacyl-tRNA synthetase family. As to quaternary structure, monomer.

The protein resides in the cytoplasm. It catalyses the reaction tRNA(Arg) + L-arginine + ATP = L-arginyl-tRNA(Arg) + AMP + diphosphate. This Mycoplasmoides gallisepticum (strain R(low / passage 15 / clone 2)) (Mycoplasma gallisepticum) protein is Arginine--tRNA ligase.